The sequence spans 232 residues: Phosphatidylserine decarboxylase proenzyme (232 aa).

Catalysis depends on Ser-190, which acts as the Schiff-base intermediate with substrate; via pyruvic acid. Ser-190 carries the pyruvic acid (Ser); by autocatalysis modification.

The protein belongs to the phosphatidylserine decarboxylase family. PSD-A subfamily. Heterodimer of a large membrane-associated beta subunit and a small pyruvoyl-containing alpha subunit. Pyruvate is required as a cofactor. In terms of processing, is synthesized initially as an inactive proenzyme. Formation of the active enzyme involves a self-maturation process in which the active site pyruvoyl group is generated from an internal serine residue via an autocatalytic post-translational modification. Two non-identical subunits are generated from the proenzyme in this reaction, and the pyruvate is formed at the N-terminus of the alpha chain, which is derived from the carboxyl end of the proenzyme. The post-translation cleavage follows an unusual pathway, termed non-hydrolytic serinolysis, in which the side chain hydroxyl group of the serine supplies its oxygen atom to form the C-terminus of the beta chain, while the remainder of the serine residue undergoes an oxidative deamination to produce ammonia and the pyruvoyl prosthetic group on the alpha chain.

It is found in the cell membrane. It catalyses the reaction a 1,2-diacyl-sn-glycero-3-phospho-L-serine + H(+) = a 1,2-diacyl-sn-glycero-3-phosphoethanolamine + CO2. It participates in phospholipid metabolism; phosphatidylethanolamine biosynthesis; phosphatidylethanolamine from CDP-diacylglycerol: step 2/2. In terms of biological role, catalyzes the formation of phosphatidylethanolamine (PtdEtn) from phosphatidylserine (PtdSer). The chain is Phosphatidylserine decarboxylase proenzyme from Brucella canis (strain ATCC 23365 / NCTC 10854 / RM-666).